A 47-amino-acid polypeptide reads, in one-letter code: ATP-dependent zinc metalloprotease FTSH, chloroplastic (47 aa).

This sequence in the N-terminal section; belongs to the AAA ATPase family. In the C-terminal section; belongs to the peptidase M41 family. It depends on Zn(2+) as a cofactor.

The protein resides in the plastid. It is found in the chloroplast membrane. Functionally, seems to act as an ATP-dependent zinc metallopeptidase. The chain is ATP-dependent zinc metalloprotease FTSH, chloroplastic from Populus euphratica (Euphrates poplar).